Reading from the N-terminus, the 138-residue chain is Cysteine desulfuration protein SufE (138 aa).

The active-site Cysteine persulfide intermediate is cysteine 51.

Belongs to the SufE family. As to quaternary structure, homodimer. Interacts with SufS.

It localises to the cytoplasm. It participates in cofactor biosynthesis; iron-sulfur cluster biosynthesis. Participates in cysteine desulfuration mediated by SufS. Cysteine desulfuration mobilizes sulfur from L-cysteine to yield L-alanine and constitutes an essential step in sulfur metabolism for biosynthesis of a variety of sulfur-containing biomolecules. Functions as a sulfur acceptor for SufS, by mediating the direct transfer of the sulfur atom from the S-sulfanylcysteine of SufS, an intermediate product of cysteine desulfuration process. The polypeptide is Cysteine desulfuration protein SufE (Citrobacter koseri (strain ATCC BAA-895 / CDC 4225-83 / SGSC4696)).